Consider the following 146-residue polypeptide: SecB-like chaperone SmegB (146 aa).

The protein belongs to the SecB-like family.

Chaperone component of an orphan antitoxin chaperone (AC) system; there is no toxin gene in close genomic proximity. When expressed in E.coli complements the cold-sensitive phenotype of a secB deletion, suggesting it may have a generic chaperone function. Does not however complement the toxin-neutralizing effect of its M.tuberculosis paralog Rv1957 (AC P95257) in E.coli, probably because the antitoxin genes are not from the same family. The chain is SecB-like chaperone SmegB from Mycolicibacterium smegmatis (strain ATCC 700084 / mc(2)155) (Mycobacterium smegmatis).